A 179-amino-acid chain; its full sequence is Segregation and condensation protein B (179 aa).

Belongs to the ScpB family. As to quaternary structure, homodimer. Homodimerization may be required to stabilize the binding of ScpA to the Smc head domains. Component of a cohesin-like complex composed of ScpA, ScpB and the Smc homodimer, in which ScpA and ScpB bind to the head domain of Smc. The presence of the three proteins is required for the association of the complex with DNA.

Its subcellular location is the cytoplasm. Participates in chromosomal partition during cell division. May act via the formation of a condensin-like complex containing Smc and ScpA that pull DNA away from mid-cell into both cell halves. This is Segregation and condensation protein B from Streptococcus equi subsp. zooepidemicus (strain H70).